The chain runs to 98 residues: Cysteine-rich and transmembrane domain-containing protein WIH2 (98 aa).

Residues 1 to 77 are disordered; sequence MSQYNQPPVG…PPQHQQQQSS (77 aa). Residues 9-21 are compositionally biased toward pro residues; sequence VGVPPPQGYPPEG. Residues 37-55 are compositionally biased toward low complexity; the sequence is YPQQGYPPQGYPQQGYPQQ. Residues 56-70 are compositionally biased toward pro residues; the sequence is GYPPPYAPQYPPPPQ. A helical membrane pass occupies residues 75–92; it reads QSSPGFLEGCLAALCCCC.

The protein belongs to the CYSTM1 family. As to expression, expressed in floral organ primordia.

Its subcellular location is the membrane. Its function is as follows. Required for the promotion of megasporogenesis, or promotion of germ cell formation from somatic precursor cells. Acts redundantly with WIH1. Functions in a genetic pathway downstream of SPL/NZZ and WUS and together with TRN2 in promoting megasporogenesis. This Arabidopsis thaliana (Mouse-ear cress) protein is Cysteine-rich and transmembrane domain-containing protein WIH2.